Here is a 274-residue protein sequence, read N- to C-terminus: Large ribosomal subunit protein uL2 (274 aa).

The tract at residues 224–256 is disordered; that stretch reads VMNPVDHPHGGGEGKTGEGRHPVDPWGNLTKGY. The span at 229 to 246 shows a compositional bias: basic and acidic residues; sequence DHPHGGGEGKTGEGRHPV.

It belongs to the universal ribosomal protein uL2 family. In terms of assembly, part of the 50S ribosomal subunit. Forms a bridge to the 30S subunit in the 70S ribosome.

In terms of biological role, one of the primary rRNA binding proteins. Required for association of the 30S and 50S subunits to form the 70S ribosome, for tRNA binding and peptide bond formation. It has been suggested to have peptidyltransferase activity; this is somewhat controversial. Makes several contacts with the 16S rRNA in the 70S ribosome. This Polaromonas naphthalenivorans (strain CJ2) protein is Large ribosomal subunit protein uL2.